A 74-amino-acid chain; its full sequence is Translational regulator CsrA (74 aa).

Belongs to the CsrA/RsmA family. Homodimer; the beta-strands of each monomer intercalate to form a hydrophobic core, while the alpha-helices form wings that extend away from the core.

It is found in the cytoplasm. A translational regulator that binds mRNA to regulate translation initiation and/or mRNA stability. Usually binds in the 5'-UTR at or near the Shine-Dalgarno sequence preventing ribosome-binding, thus repressing translation. Its main target seems to be the major flagellin gene, while its function is anatagonized by FliW. This Oceanobacillus iheyensis (strain DSM 14371 / CIP 107618 / JCM 11309 / KCTC 3954 / HTE831) protein is Translational regulator CsrA.